The primary structure comprises 126 residues: Small ribosomal subunit protein uS11 (126 aa).

Belongs to the universal ribosomal protein uS11 family. Part of the 30S ribosomal subunit. Interacts with proteins S7 and S18. Binds to IF-3.

In terms of biological role, located on the platform of the 30S subunit, it bridges several disparate RNA helices of the 16S rRNA. Forms part of the Shine-Dalgarno cleft in the 70S ribosome. The chain is Small ribosomal subunit protein uS11 from Orientia tsutsugamushi (strain Boryong) (Rickettsia tsutsugamushi).